The sequence spans 156 residues: Transcription elongation factor GreA (156 aa).

Residues 2-78 (AKEIILTQEG…MISKAKLIED (77 aa)) are a coiled coil.

The protein belongs to the GreA/GreB family.

Necessary for efficient RNA polymerase transcription elongation past template-encoded arresting sites. The arresting sites in DNA have the property of trapping a certain fraction of elongating RNA polymerases that pass through, resulting in locked ternary complexes. Cleavage of the nascent transcript by cleavage factors such as GreA or GreB allows the resumption of elongation from the new 3'terminus. GreA releases sequences of 2 to 3 nucleotides. The protein is Transcription elongation factor GreA of Mesoplasma florum (strain ATCC 33453 / NBRC 100688 / NCTC 11704 / L1) (Acholeplasma florum).